Consider the following 160-residue polypeptide: Transcription antitermination protein NusB (160 aa).

The protein belongs to the NusB family.

Its function is as follows. Involved in transcription antitermination. Required for transcription of ribosomal RNA (rRNA) genes. Binds specifically to the boxA antiterminator sequence of the ribosomal RNA (rrn) operons. This is Transcription antitermination protein NusB from Mycolicibacterium smegmatis (strain ATCC 700084 / mc(2)155) (Mycobacterium smegmatis).